The following is a 372-amino-acid chain: PqqA peptide cyclase (372 aa).

The region spanning 4–220 (APPPLSVLLE…ETARRQLGDR (217 aa)) is the Radical SAM core domain. Cys18, Cys22, and Cys25 together coordinate [4Fe-4S] cluster. The disordered stretch occupies residues 342-372 (ATAEQESASPAPAFIYRRPERPAAATADPLE).

This sequence belongs to the radical SAM superfamily. PqqE family. As to quaternary structure, interacts with PqqD. The interaction is necessary for activity of PqqE. The cofactor is [4Fe-4S] cluster.

It catalyses the reaction [PQQ precursor protein] + S-adenosyl-L-methionine = E-Y cross-linked-[PQQ precursor protein] + 5'-deoxyadenosine + L-methionine + H(+). Its pathway is cofactor biosynthesis; pyrroloquinoline quinone biosynthesis. Catalyzes the cross-linking of a glutamate residue and a tyrosine residue in the PqqA protein as part of the biosynthesis of pyrroloquinoline quinone (PQQ). The sequence is that of PqqA peptide cyclase from Xanthomonas euvesicatoria pv. vesicatoria (strain 85-10) (Xanthomonas campestris pv. vesicatoria).